Reading from the N-terminus, the 268-residue chain is Protein MGF 300-1L (268 aa).

Over 1 to 175 the chain is Cytoplasmic; sequence MVSLTTYCLK…QTFKTFYAKN (175 aa). A helical transmembrane segment spans residues 176–193; the sequence is YSLSTLYCIFLAIYYKLY. The Extracellular segment spans residues 194–268; it reads MALRKMVKIY…MYAFSQNNFW (75 aa).

It belongs to the asfivirus MGF 300 family.

It localises to the host membrane. In terms of biological role, plays a role in virus cell tropism, and may be required for efficient virus replication in macrophages. The sequence is that of Protein MGF 300-1L from African swine fever virus (isolate Tick/Malawi/Lil 20-1/1983) (ASFV).